The primary structure comprises 175 residues: MKDLSIRNDMAPTVSLLYSAVEENSLRLASIVSHMTHSELYYKGRCQTKNSTAQLLHHITNVDIRWVWRIKENRIPDHIEQAYGPMTDESGRLPEPVNQPDLDELLKRHQHVVEKLKSVCFTLTENALNQPLSFEGDTATIRWGIWHMADHNRYHQAHIEALKKEWKQDVAKYER.

This is an uncharacterized protein from Bacillus subtilis (strain 168).